Reading from the N-terminus, the 367-residue chain is Ferrochelatase (367 aa).

Residues His-226 and Glu-307 each coordinate Fe cation.

The protein belongs to the ferrochelatase family.

It localises to the cytoplasm. It catalyses the reaction heme b + 2 H(+) = protoporphyrin IX + Fe(2+). Its pathway is porphyrin-containing compound metabolism; protoheme biosynthesis; protoheme from protoporphyrin-IX: step 1/1. In terms of biological role, catalyzes the ferrous insertion into protoporphyrin IX. The chain is Ferrochelatase from Burkholderia pseudomallei (strain 668).